We begin with the raw amino-acid sequence, 45 residues long: Mu-conotoxin-like Cal 12.1.2c (45 aa).

4 cysteine pairs are disulfide-bonded: Cys-3–Cys-16, Cys-11–Cys-28, Cys-18–Cys-33, and Cys-27–Cys-39. Pro-23 is modified (4-hydroxyproline). A 6'-bromotryptophan mark is found at Trp-37 and Trp-38. Residue Pro-40 is modified to 4-hydroxyproline. Residue Trp-44 is modified to 6'-bromotryptophan.

In terms of tissue distribution, expressed by the venom duct.

Its subcellular location is the secreted. Mu-conotoxins block voltage-gated sodium channels. This toxin reversibly blocks voltage-gated sodium channel in cephalopods, with no alteration in the voltage dependence of sodium conductance or on the kinetics of inactivation. The chain is Mu-conotoxin-like Cal 12.1.2c from Californiconus californicus (California cone).